Here is a 291-residue protein sequence, read N- to C-terminus: ATP synthase gamma chain (291 aa).

It belongs to the ATPase gamma chain family. F-type ATPases have 2 components, CF(1) - the catalytic core - and CF(0) - the membrane proton channel. CF(1) has five subunits: alpha(3), beta(3), gamma(1), delta(1), epsilon(1). CF(0) has three main subunits: a, b and c.

The protein resides in the cell inner membrane. Produces ATP from ADP in the presence of a proton gradient across the membrane. The gamma chain is believed to be important in regulating ATPase activity and the flow of protons through the CF(0) complex. The chain is ATP synthase gamma chain from Sphingopyxis alaskensis (strain DSM 13593 / LMG 18877 / RB2256) (Sphingomonas alaskensis).